We begin with the raw amino-acid sequence, 457 residues long: 1-carboxybiuret hydrolase subunit AtzE (457 aa).

Residues lysine 74 and serine 150 each act as charge relay system in the active site. Serine 174 (acyl-ester intermediate) is an active-site residue.

This sequence belongs to the amidase family. As to quaternary structure, heterotetramer consisting of 2 AtzE and 2 AtzG subunits.

The catalysed reaction is 1-carboxybiuret + H2O = urea-1,3-dicarboxylate + NH4(+). It functions in the pathway xenobiotic degradation; atrazine degradation. In terms of biological role, hydrolyzes 1-carboxybiuret to urea-1,3-dicarboxylate and NH(3). This Pseudomonas sp. (strain ADP) protein is 1-carboxybiuret hydrolase subunit AtzE.